The following is a 487-amino-acid chain: mRNA cleavage and polyadenylation factor CLP1 (487 aa).

ATP contacts are provided by residues E19, K59, and N134–T139.

This sequence belongs to the Clp1 family. Clp1 subfamily. In terms of assembly, component of a pre-mRNA cleavage factor complex. Interacts directly with PCF11.

It localises to the nucleus. Required for endonucleolytic cleavage during polyadenylation-dependent pre-mRNA 3'-end formation. This Laccaria bicolor (strain S238N-H82 / ATCC MYA-4686) (Bicoloured deceiver) protein is mRNA cleavage and polyadenylation factor CLP1.